The chain runs to 438 residues: Anthranilate synthase component 1 (438 aa).

Residues S45 and P220 to L222 each bind L-tryptophan. G255–T256 is a chorismate binding site. E282 contributes to the Mg(2+) binding site. Chorismate-binding positions include Y370, R389, G405–G407, and G407. Residue E420 participates in Mg(2+) binding.

The protein belongs to the anthranilate synthase component I family. As to quaternary structure, heterotetramer consisting of two non-identical subunits: a beta subunit (TrpG) and a large alpha subunit (TrpE). Mg(2+) is required as a cofactor.

The catalysed reaction is chorismate + L-glutamine = anthranilate + pyruvate + L-glutamate + H(+). It participates in amino-acid biosynthesis; L-tryptophan biosynthesis; L-tryptophan from chorismate: step 1/5. With respect to regulation, feedback inhibited by tryptophan. In terms of biological role, part of a heterotetrameric complex that catalyzes the two-step biosynthesis of anthranilate, an intermediate in the biosynthesis of L-tryptophan. In the first step, the glutamine-binding beta subunit (TrpG) of anthranilate synthase (AS) provides the glutamine amidotransferase activity which generates ammonia as a substrate that, along with chorismate, is used in the second step, catalyzed by the large alpha subunit of AS (TrpE) to produce anthranilate. In the absence of TrpG, TrpE can synthesize anthranilate directly from chorismate and high concentrations of ammonia. The polypeptide is Anthranilate synthase component 1 (trpE) (Aeropyrum pernix (strain ATCC 700893 / DSM 11879 / JCM 9820 / NBRC 100138 / K1)).